We begin with the raw amino-acid sequence, 458 residues long: UDP-N-acetylmuramate--L-alanine ligase (458 aa).

ATP is bound at residue 118-124 (GTHGKTT).

It belongs to the MurCDEF family.

The protein localises to the cytoplasm. The enzyme catalyses UDP-N-acetyl-alpha-D-muramate + L-alanine + ATP = UDP-N-acetyl-alpha-D-muramoyl-L-alanine + ADP + phosphate + H(+). The protein operates within cell wall biogenesis; peptidoglycan biosynthesis. Functionally, cell wall formation. The protein is UDP-N-acetylmuramate--L-alanine ligase of Clostridium botulinum (strain Loch Maree / Type A3).